The sequence spans 280 residues: Manganese import system permease protein ScaB (280 aa).

8 helical membrane passes run 18 to 38 (ALIT…FIIL), 61 to 81 (ILGI…SILI), 94 to 114 (TAIG…IGVA), 139 to 159 (TIGV…PLLL), 174 to 194 (VKIY…TAMQ), 196 to 216 (VGTI…YLYA), 222 to 242 (MMLL…FIGY), and 246 to 266 (IAVG…SFFI).

This sequence belongs to the ABC-3 integral membrane protein family.

The protein localises to the cell membrane. Functionally, part of an ABC transporter complex involved in manganese import. This Streptococcus parasanguinis protein is Manganese import system permease protein ScaB.